The sequence spans 113 residues: uncharacterized protein (113 aa).

The protein resides in the cytoplasm. It localises to the nucleus. This is an uncharacterized protein from Saccharomyces cerevisiae (strain ATCC 204508 / S288c) (Baker's yeast).